The chain runs to 488 residues: Glutamate--tRNA ligase (488 aa).

Positions 16 to 26 (PSPTGEPHVGT) match the 'HIGH' region motif. The 'KMSKS' region motif lies at 257–261 (KLSKR). Lys260 is an ATP binding site.

Belongs to the class-I aminoacyl-tRNA synthetase family. Glutamate--tRNA ligase type 1 subfamily. In terms of assembly, monomer.

Its subcellular location is the cytoplasm. The enzyme catalyses tRNA(Glu) + L-glutamate + ATP = L-glutamyl-tRNA(Glu) + AMP + diphosphate. In terms of biological role, catalyzes the attachment of glutamate to tRNA(Glu) in a two-step reaction: glutamate is first activated by ATP to form Glu-AMP and then transferred to the acceptor end of tRNA(Glu). The protein is Glutamate--tRNA ligase of Rhizobium etli (strain ATCC 51251 / DSM 11541 / JCM 21823 / NBRC 15573 / CFN 42).